Here is a 204-residue protein sequence, read N- to C-terminus: Nucleoside triphosphate pyrophosphatase (204 aa).

D78 functions as the Proton acceptor in the catalytic mechanism.

The protein belongs to the Maf family. It depends on a divalent metal cation as a cofactor.

The protein localises to the cytoplasm. It catalyses the reaction a ribonucleoside 5'-triphosphate + H2O = a ribonucleoside 5'-phosphate + diphosphate + H(+). The enzyme catalyses a 2'-deoxyribonucleoside 5'-triphosphate + H2O = a 2'-deoxyribonucleoside 5'-phosphate + diphosphate + H(+). Functionally, nucleoside triphosphate pyrophosphatase. May have a dual role in cell division arrest and in preventing the incorporation of modified nucleotides into cellular nucleic acids. The polypeptide is Nucleoside triphosphate pyrophosphatase (Prochlorococcus marinus (strain MIT 9215)).